A 103-amino-acid chain; its full sequence is uncharacterized protein (103 aa).

2 stretches are compositionally biased toward polar residues: residues 1-10 and 18-28; these read MSNSCSTSSY and TRSGSNVNRNY. The segment at 1-28 is disordered; the sequence is MSNSCSTSSYPIRRKTPTRSGSNVNRNY.

This is an uncharacterized protein from Acanthamoeba polyphaga mimivirus (APMV).